The primary structure comprises 137 residues: Large ribosomal subunit protein uL16 (137 aa).

This sequence belongs to the universal ribosomal protein uL16 family. Part of the 50S ribosomal subunit.

Binds 23S rRNA and is also seen to make contacts with the A and possibly P site tRNAs. The protein is Large ribosomal subunit protein uL16 of Leptospira biflexa serovar Patoc (strain Patoc 1 / Ames).